A 396-amino-acid chain; its full sequence is Elongation factor Tu (396 aa).

Positions Lys10–Glu206 constitute a tr-type G domain. The interval Gly19 to Thr26 is G1. GTP is bound at residue Gly19–Thr26. Thr26 provides a ligand contact to Mg(2+). Residues Gly60 to Ala64 are G2. The tract at residues Asp81–Gly84 is G3. GTP-binding positions include Asp81–His85 and Asn136–Asp139. Positions Asn136–Asp139 are G4. Residues Ser174–Leu176 are G5.

This sequence belongs to the TRAFAC class translation factor GTPase superfamily. Classic translation factor GTPase family. EF-Tu/EF-1A subfamily. In terms of assembly, monomer.

The protein localises to the cytoplasm. It catalyses the reaction GTP + H2O = GDP + phosphate + H(+). Functionally, GTP hydrolase that promotes the GTP-dependent binding of aminoacyl-tRNA to the A-site of ribosomes during protein biosynthesis. This chain is Elongation factor Tu, found in Geobacter sulfurreducens (strain ATCC 51573 / DSM 12127 / PCA).